The primary structure comprises 959 residues: MSDKTNDDKTLSVNPKKTLTLKRPGVEQSTVRQNFSHGRTKAVVVETKKRKFSRPDEKPEVEAAAAPKPAAPAAAPQQAPASAPVSASAAQASAPQPAPVKAPATKAPAAPSAPVTKPHVAQQRPVHQRPGGQQAQRPRPADRSGMVLNTLSRSEMDARRRALEEAQIREVEERARAVEEAKRRAEEDARRAKEREESARRQAEEEARLKAEAEARRKAEEEAAKRMPQPEARSERRDDARPAPYGARPQQAGRPQGGRPQPAGRPQQGSPRPAPIIADAAPIAGKPLPQSQLRKPGQSDDDDDRRSGAARRGVAAKPEVRAPKVVKGEDDRRRGKLTLTSNLEEEGRSRSLSAMRRRQEKFKRSQMQETREKISREVTIPETITLQELAQRMAERSVDIIKYLMKQGQMMKPGDVIDADTAQLIAEEFGHTVKRVAESDVEEGIFDVADNESATVSRPPVVTIMGHVDHGKTSLLDAIRHANVVSGEAGGITQHIGAYQVVQNGQKITFIDTPGHAAFTAMRARGAQATDIAILVVAADDSVMPQTIESINHAKAAGVPIIVAINKIDKPAADPQKVRTALLQHEVFVESMGGEVLDVEVSAKNKINLDKLLDAVLLQAEMLDLKADPDRTAEGVVIEAQLDRGRGSVATVLIQKGTLHPGDILVAGSEWGRVRALVNDRGEHVKEAGPAMPVEILGLQGTPQAGDRFAVVANEAKAREIAEYRQRLARDKAVARQSGARGSLEQMMNQLQVSGTKEFPLVIKGDVQGSIEAITNALDKLGTDEVRARIVHSGAGGITESDVSLAEASNAAIIGFNVRANKQARNSAEQQGIEIRYYNIIYDLIDDVKAAMSGLLSPERRETFLGNAEILEVFNITKVGKVAGCRVTEGKVERGAGVRLIRDNVVIHEGKLKTLKRFKDEVAEVPSGQECGMAFENYDDIRAGDVIEAFRVEHVSRTL.

Basic and acidic residues predominate over residues 1-10 (MSDKTNDDKT). Residues 1 to 374 (MSDKTNDDKT…SQMQETREKI (374 aa)) are disordered. Polar residues predominate over residues 27–37 (EQSTVRQNFSH). Low complexity-rich tracts occupy residues 63–118 (AAAA…VTKP) and 128–138 (QRPGGQQAQRP). 2 stretches are compositionally biased toward basic and acidic residues: residues 154–225 (SEMD…EAAK) and 232–241 (ARSERRDDAR). Residues 246–284 (GARPQQAGRPQGGRPQPAGRPQQGSPRPAPIIADAAPIA) show a composition bias toward low complexity. Residues 318-333 (PEVRAPKVVKGEDDRR) show a composition bias toward basic and acidic residues. A tr-type G domain is found at 457-626 (SRPPVVTIMG…LLQAEMLDLK (170 aa)). Positions 466–473 (GHVDHGKT) are G1. 466–473 (GHVDHGKT) provides a ligand contact to GTP. Residues 491–495 (GITQH) form a G2 region. Positions 512–515 (DTPG) are G3. Residues 512–516 (DTPGH) and 566–569 (NKID) each bind GTP. A G4 region spans residues 566 to 569 (NKID). The segment at 602–604 (SAK) is G5.

The protein belongs to the TRAFAC class translation factor GTPase superfamily. Classic translation factor GTPase family. IF-2 subfamily.

It is found in the cytoplasm. Functionally, one of the essential components for the initiation of protein synthesis. Protects formylmethionyl-tRNA from spontaneous hydrolysis and promotes its binding to the 30S ribosomal subunits. Also involved in the hydrolysis of GTP during the formation of the 70S ribosomal complex. This is Translation initiation factor IF-2 from Brucella canis (strain ATCC 23365 / NCTC 10854 / RM-666).